Consider the following 318-residue polypeptide: Small ribosomal subunit protein mS26 (318 aa).

The disordered stretch occupies residues 295–318 (IDSKLNPTSNGAGNNGNNNNTTNL). Low complexity predominate over residues 300–318 (NPTSNGAGNNGNNNNTTNL).

This sequence belongs to the mitochondrion-specific ribosomal protein mS26 family. As to quaternary structure, component of the mitochondrial small ribosomal subunit (mt-SSU). Mature yeast 74S mitochondrial ribosomes consist of a small (37S) and a large (54S) subunit. The 37S small subunit contains a 15S ribosomal RNA (15S mt-rRNA) and 34 different proteins. The 54S large subunit contains a 21S rRNA (21S mt-rRNA) and 46 different proteins.

It is found in the mitochondrion. Functionally, component of the mitochondrial ribosome (mitoribosome), a dedicated translation machinery responsible for the synthesis of mitochondrial genome-encoded proteins, including at least some of the essential transmembrane subunits of the mitochondrial respiratory chain. The mitoribosomes are attached to the mitochondrial inner membrane and translation products are cotranslationally integrated into the membrane. The sequence is that of Small ribosomal subunit protein mS26 (PET123) from Saccharomyces cerevisiae (strain ATCC 204508 / S288c) (Baker's yeast).